Consider the following 338-residue polypeptide: NADPH dehydrogenase (338 aa).

Position 28 (Tyr28) interacts with substrate. 2 residues coordinate FMN: Ala60 and Gln102. 164 to 167 lines the substrate pocket; the sequence is HAAH. Residues Arg215 and 307–308 contribute to the FMN site; that span reads AR.

The protein belongs to the NADH:flavin oxidoreductase/NADH oxidase family. NamA subfamily. As to quaternary structure, homotetramer. The cofactor is FMN.

It carries out the reaction A + NADPH + H(+) = AH2 + NADP(+). Its function is as follows. Catalyzes the reduction of the double bond of an array of alpha,beta-unsaturated aldehydes and ketones. It also reduces the nitro group of nitroester and nitroaromatic compounds. It could have a role in detoxification processes. This is NADPH dehydrogenase from Bacillus velezensis (strain DSM 23117 / BGSC 10A6 / LMG 26770 / FZB42) (Bacillus amyloliquefaciens subsp. plantarum).